The primary structure comprises 429 residues: E3 ubiquitin-protein ligase ZNRF4 (429 aa).

The N-terminal stretch at 1 to 27 (MPLCRPEHLMPRASRVPVAASLPLSHA) is a signal peptide. Over 28–250 (VIPTQLPSRP…PPCHDLGCHP (223 aa)) the chain is Lumenal. Residues 30–67 (PTQLPSRPGHRPPGRPRRCPKASCLPPPVGPSSTQTAK) form a disordered region. Residues 37–49 (PGHRPPGRPRRCP) are compositionally biased toward basic residues. N107, N152, and N229 each carry an N-linked (GlcNAc...) asparagine glycan. A PA domain is found at 151 to 223 (GNRSLGAIVL…VSEAASQDLR (73 aa)). The helical transmembrane segment at 251 to 271 (VLTVSWVLGCTLALVVSAFFV) threads the bilayer. At 272 to 429 (LNHLWLWAQA…SSAPPEAPGQ (158 aa)) the chain is on the cytoplasmic side. Residues 309–352 (CAICLDEYEEGDQLKILPCSHTYHCKCIDPWFSQAPRRSCPVCK) form an RING-type; atypical zinc finger.

As to quaternary structure, interacts with CANX.

The protein localises to the endoplasmic reticulum membrane. The catalysed reaction is S-ubiquitinyl-[E2 ubiquitin-conjugating enzyme]-L-cysteine + [acceptor protein]-L-lysine = [E2 ubiquitin-conjugating enzyme]-L-cysteine + N(6)-ubiquitinyl-[acceptor protein]-L-lysine.. The protein operates within protein modification; protein ubiquitination. Functionally, E3 ubiquitin-protein ligase that acts as a negative regulator of NOD2 signaling by mediating ubiquitination and degradation of RIPK2. Also catalyzes ubiquitination and proteasomal degradation of CANX within the endoplasmic reticulum. Could have a role in spermatogenesis. In Homo sapiens (Human), this protein is E3 ubiquitin-protein ligase ZNRF4.